We begin with the raw amino-acid sequence, 185 residues long: uncharacterized protein (185 aa).

Positions 1–24 are cleaved as a signal peptide; that stretch reads MPCNRAVFGAFVLALLISLQSVYF. Residues 50–70 form a helical membrane-spanning segment; sequence VAVNVIVEFSFDILFFLCGLL. Over residues 96–113 the composition is skewed to basic and acidic residues; the sequence is ELEHVSSRRRNDSRDDST. Residues 96-185 form a disordered region; the sequence is ELEHVSSRRR…LFTAGGIGLP (90 aa). The segment covering 114 to 126 has biased composition (polar residues); that stretch reads VRNVSKTSPLASQ. A compositionally biased stretch (basic and acidic residues) spans 127–138; sequence RSRDHFDGDPRE. Positions 139 to 155 are enriched in pro residues; sequence PAPPAYSPADFYPPPAS.

It is found in the host membrane. This is an uncharacterized protein from Colorado tick fever virus (strain USA/Florio N-7180) (CTFV).